The primary structure comprises 606 residues: Glutamine--fructose-6-phosphate aminotransferase [isomerizing] (606 aa).

C2 serves as the catalytic Nucleophile; for GATase activity. One can recognise a Glutamine amidotransferase type-2 domain in the interval 2 to 218; it reads CGIFGYLGEK…SGELAVLRIG (217 aa). 2 consecutive SIS domains span residues 278–424 and 448–596; these read FTES…HRQV and LDSS…VDRP. Catalysis depends on K601, which acts as the For Fru-6P isomerization activity.

As to quaternary structure, homodimer.

It localises to the cytoplasm. It catalyses the reaction D-fructose 6-phosphate + L-glutamine = D-glucosamine 6-phosphate + L-glutamate. Catalyzes the first step in hexosamine metabolism, converting fructose-6P into glucosamine-6P using glutamine as a nitrogen source. The sequence is that of Glutamine--fructose-6-phosphate aminotransferase [isomerizing] from Chlamydia trachomatis serovar D (strain ATCC VR-885 / DSM 19411 / UW-3/Cx).